A 64-amino-acid chain; its full sequence is Large ribosomal subunit protein bL35 (64 aa).

This sequence belongs to the bacterial ribosomal protein bL35 family.

This chain is Large ribosomal subunit protein bL35, found in Shewanella putrefaciens (strain CN-32 / ATCC BAA-453).